The sequence spans 306 residues: 2-phospho-L-lactate transferase (306 aa).

Asp48 contributes to the 7,8-didemethyl-8-hydroxy-5-deazariboflavin binding site.

It belongs to the CofD family. As to quaternary structure, homodimer. Mg(2+) serves as cofactor.

It catalyses the reaction (2S)-lactyl-2-diphospho-5'-guanosine + 7,8-didemethyl-8-hydroxy-5-deazariboflavin = oxidized coenzyme F420-0 + GMP + H(+). Its pathway is cofactor biosynthesis; coenzyme F420 biosynthesis. Its function is as follows. Catalyzes the transfer of the 2-phospholactate moiety from (2S)-lactyl-2-diphospho-5'-guanosine to 7,8-didemethyl-8-hydroxy-5-deazariboflavin (FO) with the formation of oxidized coenzyme F420-0 and GMP. The polypeptide is 2-phospho-L-lactate transferase (Methanococcoides burtonii (strain DSM 6242 / NBRC 107633 / OCM 468 / ACE-M)).